A 595-amino-acid chain; its full sequence is Epsin-2 (595 aa).

A 1,2-diacyl-sn-glycero-3-phospho-(1D-myo-inositol-4,5-bisphosphate) contacts are provided by arginine 8, lysine 11, arginine 25, asparagine 30, arginine 63, and histidine 73. One can recognise an ENTH domain in the interval 12-144 (NIVNNYSEAE…KDEERLKVER (133 aa)). Residues 164-183 (NQITFGRGSSQPNLSTSYSE) show a composition bias toward polar residues. 4 disordered regions span residues 164 to 254 (NQIT…RLRR), 267 to 289 (SRRDTVKVPKKKEAKACCKPGSH), 305 to 396 (SGPV…KPSS), and 423 to 469 (TSKK…PESF). Residue arginine 170 is modified to Omega-N-methylarginine. Phosphoserine is present on residues serine 173, serine 192, and serine 195. Polar residues-rich tracts occupy residues 197–216 (HGSTSPRVSSELEQARPQTS) and 235–245 (EQSSESVQTAR). UIM domains lie at 218–237 (EEELQLQLALAMSREVAEQS) and 255–274 (GDDLRLQMALEESRRDTVKV). Positions 306–337 (GPVTQKTEPWSAGASANQTNPWGGTVAPSNIT) are enriched in polar residues. A run of 4 repeats spans residues 313–315 (EPW), 325–327 (NPW), 338–340 (DPW), and 352–354 (DPW). The segment at 313 to 389 (EPWSAGASAN…SNAGKTTDAW (77 aa)) is 6 X 3 AA repeats of [DE]-P-W. Positions 358–367 (TTASTQSVPK) are enriched in polar residues. Residues 370–372 (DPW) form repeat 5. The span at 374-384 (ASQQPASNAGK) shows a compositional bias: polar residues. The stretch at 387–389 (DAW) is repeat 6. Serine 443 carries the phosphoserine modification. Low complexity predominate over residues 449–460 (SQSLTSASSKPS). Phosphothreonine is present on threonine 465. A run of 2 repeats spans residues 494–496 (NPF) and 508–510 (NPF). Residues 494–593 (NPFLAPGAAA…AQSTGTTNPF (100 aa)) are 3 X 3 AA repeats of N-P-F. Serine 526 is subject to Phosphoserine. The stretch at 591–593 (NPF) is repeat 3.

The protein belongs to the epsin family. Binds EPS15, AP-2 and clathrin. Interacts with UBQLN2. Interacts with ITSN1. Post-translationally, ubiquitinated.

The protein resides in the cytoplasm. Plays a role in the formation of clathrin-coated invaginations and endocytosis. The chain is Epsin-2 (Epn2) from Mus musculus (Mouse).